A 449-amino-acid chain; its full sequence is MFPGQGRHTYGGQQQLLQLQQYNYGPPQGPPPNGYGPPPGPPPNGYGPPPGPPPQNSWGYGNPSGTQSSNQQRYQGQQSGQQNYNGGYQRPSQPPPQQSGNQRGQPGQNGEPDYGHQYGSGQYSRPPTNQQSFGVENYNYQYSACNGRKKALLVGINYIGTANELRGPINDVNNVEQFLLTHGFKSDDIVKLTDDQRVQRAIPTRQNILDAIQWLVKDARPNDSLFFHYSGHGGQTEDQPDQYGNYDEDDGYDEVIYPLDFQTNGFIVDDLLHDMMVKTLPPGCRMTALFDSCHSGSVLDLPYMYSTKGVLKEPNVMKEAGQGLLQAAMSYATGNSAGIFKGLSSSVKSFMNQGRSSQANEYSKQTKTAACDAISLSGCKDDQTSADSSIGGQATGAMSYAFLTVMNQNPNQSYLSLLQNMRTILQSKYSQKPQLTASHPIDCNLQFIF.

A disordered region spans residues 1-132 (MFPGQGRHTY…YSRPPTNQQS (132 aa)). Positions 10–26 (YGGQQQLLQLQQYNYGP) are enriched in low complexity. Residues 27–55 (PQGPPPNGYGPPPGPPPNGYGPPPGPPPQ) are compositionally biased toward pro residues. Residues 56-66 (NSWGYGNPSGT) show a composition bias toward polar residues. 2 stretches are compositionally biased toward low complexity: residues 67-91 (QSSN…YQRP) and 98-112 (QSGN…NGEP). Over residues 119 to 132 (GSGQYSRPPTNQQS) the composition is skewed to polar residues. Catalysis depends on residues His-232 and Cys-293.

Belongs to the peptidase C14B family.

Involved in cell death (apoptosis). This chain is Metacaspase-1 (MCA1), found in Lodderomyces elongisporus (strain ATCC 11503 / CBS 2605 / JCM 1781 / NBRC 1676 / NRRL YB-4239) (Yeast).